Here is a 282-residue protein sequence, read N- to C-terminus: MGKEVMGKKENEMAQEKERPAGSQSLFRGLMLIEILSNYPNGCPLAHLSELAGLNKSTVHRLLQGLQSCGYVTTAPAAGSYRLTTKFIAVGQKALSSLNIIHIAAPHLEALNIATGETINFSSREDDHAILIYKLEPTTGMLRTRAYIGQHMPLYCSAMGKIYMAFGHPDYVKSYWESHQHEIQPLTRNTITELPAMFDELAHIRESGAAMDREENELGVSCIAVPVFDIHGRVPYAVSISLSTSRLKQVGEKNLLKPLRETAQAISNELGFTVRDDLGAIT.

Basic and acidic residues predominate over residues 1 to 20 (MGKEVMGKKENEMAQEKERP). The tract at residues 1–21 (MGKEVMGKKENEMAQEKERPA) is disordered. Residues 23 to 85 (SQSLFRGLML…PAAGSYRLTT (63 aa)) form the HTH iclR-type domain. The segment at residues 45–64 (LAHLSELAGLNKSTVHRLLQ) is a DNA-binding region (H-T-H motif). The region spanning 100–272 (IIHIAAPHLE…AQAISNELGF (173 aa)) is the IclR-ED domain.

Negatively controls the transcription of the yiaKLMNOPQRS operon, which may be involved in the utilization of 2,3-diketo-L-gulonate. The polypeptide is DNA-binding transcriptional repressor YiaJ (yiaJ) (Escherichia coli (strain K12)).